The sequence spans 766 residues: MSNEVETSTTNGQPDQQAAPKAPSKKEKKKGSEKTDEYLLARFKGDGVKYKAKLIGIDDVPDARGDKMSQDSMMKLKGMAAAGRSQGQHKQRIWVNISLSGIKIIDEKTGVIEHEHPVNKISFIARDVTDNRAFGYVCGGEGQHQFFAIKTGQQAEPLVVDLKDLFQVIYNVKKKEEDKKKVEEANKAEENGSEALMTLDDQANKLKLGVDQMDLFGDMSTPPDLNSPTESKDILLVDLNSEIDTNQNSLRENPFLTNGVTSCSLPRPKPQASFLPENAFSANLNFFPTPNPDPFRDDPFAQPDQSAPSSFDSLTSPDQKKASLSSSSTPQSKGPLNGDTDYFGQQFDQLSNRTGKPEAQGGPWPYPSSQTQQAVRTQNGVSEREQNGFHIKSSPNPFVGSPPKGLSVPNGVKQDLESSVQSSAHDSIAIIPPPQSTKPGRGRRTAKSSANDLLASDIFASEPPGQMSPTGQPAVPQSNFLDLFKGNAPAPVGPLVGLGTVPVTPPQAGPWTPVVYSPSTTVVPGAIISGQPPSFRQPLVFGTTPAVQVWNQSPSFATPASPPPPTVWCPTTSVAPNAWSSTSPLGNPFQSNNIFPPPTMSTQSSPQPMMSSVLATPPQPPPRNGPLKDIPSDAFTGLDPLGDKEVKEVKEMFKDFQLRQPPLVPSRKGETPPSGTSSAFSSYFNNKVGIPQEHVDHDDFDANQLLNKINEPPKPAPRQGVLLGTKSADNSLENPFSKGFSSSNPSVVSQPASSDPHRSPFGNPFA.

A compositionally biased stretch (polar residues) spans M1 to Q16. The interval M1–D36 is disordered. At S2 the chain carries N-acetylserine. A Phosphoserine modification is found at S2. In terms of domain architecture, PID spans G45–L196. Y170 carries the phosphotyrosine modification. Position 193 is a phosphoserine (S193). The required for localization to clathrin-coated pits stretch occupies residues E230 to K447. Disordered regions lie at residues L284 to D482, P596 to I630, R659 to Y683, and D699 to A766. 2 short sequence motifs (DPF) span residues D293 to F295 and D298 to F300. Composition is skewed to polar residues over residues P303–G334 and P367–V381. S323 carries the post-translational modification Phosphoserine. A phosphoserine; in mitosis mark is found at S326 and S328. S401 carries the phosphoserine modification. Polar residues predominate over residues M467–F480. Over residues M600–S612 the composition is skewed to low complexity. Residues M600–N730 are sufficient for interaction with GRB2. The tract at residues P617–G625 is required for interaction with CSK. Positions K647–A766 are required for interaction with MYO6. Residues P661–G669 form a required for interaction with GRB2 and CSK region. A Phosphothreonine modification is found at T671. Residues P673–Y683 show a composition bias toward polar residues. The segment at N707–L723 is sufficient for interaction with SH3KBP1 SH3 domain. Residues S727 and S759 each carry the phosphoserine modification. The span at S727 to S753 shows a compositional bias: polar residues.

As to quaternary structure, interacts (via NPXY motif) with DAB2 (via PID domain). Can interact (via PID domain) with LDLR, APP, APLP1 and APLP2, and weakly with INPP5D (via NPXY motifs); the interaction is impaired by tyrosine phosphorylation of the respective NPXY motifs. Can weakly interact (via PID domain) with LRP1 (via NPXY motif); the interaction is enhanced by tyrosine phosphorylation of the NPXY motif. Interacts with LRP2 (via NPXY motif); the interaction is not affected by tyrosine phosphorylation of the NPXY motif. Interacts with clathrin; in vitro can assemble clathrin triskelia into polyhedral coats. Interacts with AP2A2, ITGB1, ITGB3, ITGB5, PIAS2, DAB2IP, NOSTRIN, FCHO1, DVL3 and EPS15L1. Interacts with SH3KBP1 (via SH3 domains). Interacts with GRB2; competes with SOS1 for binding to GRB2 and the interaction is enhanced by EGF and NT-3 stimulation. Isoform p96 interacts with EPS15 and ITSN1; isoform p67 does not interact with EPS15 and only weakly interacts with ITSN1. Interacts with MAP3K7; the interaction is induced by TGF-beta stimulation and may mediate TGF-beta stimulated JNK activation. Interacts with AXIN1 and PPP1CA; the interactions are mutually exclusive. Interacts with the globular tail of MYO6. Interacts (via DPF motifs) with FCHO2; the interaction is direct and required for DAB2-mediated LDLR endocytosis. Interacts with LRP6; the interaction involves LRP6 phosphorylation by CK2 and sequesters LRP6 towards clathrin-mediated endocytosis. Associates with the TGF-beta receptor complex. Interacts with SMAD2 and SMAD3; the interactions are enhanced upon TGF-beta stimulation. Interacts with GRB2; the interaction is enhanced by EGF and NT-3 stimulation. Interacts with SRC; the interaction is enhanced by EGF stimulation. In terms of processing, phosphorylated on serine residues in response to mitogenic growth-factor stimulation. Phosphorylation during mitosis is leading to membrane displacement. Isoform p96 and isoform p67 are expressed in adult kidney and fibroblasts with isoform p96 being the predominant form. Isoform p67 is the predominant isoform expressed in embryonic visceral endoderm.

The protein localises to the cytoplasmic vesicle. It is found in the clathrin-coated vesicle membrane. It localises to the membrane. Its subcellular location is the clathrin-coated pit. The protein resides in the cytoplasm. The protein localises to the nucleus. Adapter protein that functions as a clathrin-associated sorting protein (CLASP) required for clathrin-mediated endocytosis of selected cargo proteins. Can bind and assemble clathrin, and binds simultaneously to phosphatidylinositol 4,5-bisphosphate (PtdIns(4,5)P2) and cargos containing non-phosphorylated NPXY internalization motifs, such as the LDL receptor, to recruit them to clathrin-coated pits. Can function in clathrin-mediated endocytosis independently of the AP-2 complex. Involved in endocytosis of integrin beta-1; this function seems to redundant with the AP-2 complex and seems to require DAB2 binding to endocytosis accessory EH domain-containing proteins such as EPS15, EPS15L1 and ITSN1. Involved in endocytosis of cystic fibrosis transmembrane conductance regulator/CFTR. Isoform p96 is involved in endocytosis of megalin/LRP2 lipoprotein receptor during embryonal development. Required for recycling of the TGF-beta receptor. Isoform p67 is not involved in LDL receptor endocytosis. Involved in CFTR trafficking to the late endosome. Involved in several receptor-mediated signaling pathways. Involved in TGF-beta receptor signaling and facilitates phosphorylation of the signal transducer SMAD2. Mediates TFG-beta-stimulated JNK activation. May inhibit the canoniocal Wnt/beta-catenin signaling pathway by stabilizing the beta-catenin destruction complex through a competing association with axin preventing its dephosphorylation through protein phosphatase 1 (PP1). Sequesters LRP6 towards clathrin-mediated endocytosis, leading to inhibition of Wnt/beta-catenin signaling. May activate non-canonical Wnt signaling. In cell surface growth factor/Ras signaling pathways proposed to inhibit ERK activation by interrupting the binding of GRB2 to SOS1 and to inhibit SRC by preventing its activating phosphorylation at 'Tyr-419'. Proposed to be involved in modulation of androgen receptor (AR) signaling mediated by SRC activation; seems to compete with AR for interaction with SRC. Plays a role in the CSF-1 signal transduction pathway. Plays a role in cellular differentiation. Involved in cell positioning and formation of visceral endoderm (VE) during embryogenesis and proposed to be required in the VE to respond to Nodal signaling coming from the epiblast. Required for the epithelial to mesenchymal transition, a process necessary for proper embryonic development. May be involved in myeloid cell differentiation and can induce macrophage adhesion and spreading. Isoform p67 may be involved in transcriptional regulation. May act as a tumor suppressor. The chain is Disabled homolog 2 (Dab2) from Mus musculus (Mouse).